A 416-amino-acid chain; its full sequence is Serine hydroxymethyltransferase 1 (416 aa).

(6S)-5,6,7,8-tetrahydrofolate is bound by residues Leu-121 and 125–127; that span reads GHL. Lys-229 carries the N6-(pyridoxal phosphate)lysine modification. (6S)-5,6,7,8-tetrahydrofolate contacts are provided by residues Glu-245 and 354-356; that span reads SPF.

It belongs to the SHMT family. Homodimer. Pyridoxal 5'-phosphate is required as a cofactor.

It is found in the cytoplasm. The catalysed reaction is (6R)-5,10-methylene-5,6,7,8-tetrahydrofolate + glycine + H2O = (6S)-5,6,7,8-tetrahydrofolate + L-serine. The protein operates within one-carbon metabolism; tetrahydrofolate interconversion. It participates in amino-acid biosynthesis; glycine biosynthesis; glycine from L-serine: step 1/1. Its function is as follows. Catalyzes the reversible interconversion of serine and glycine with tetrahydrofolate (THF) serving as the one-carbon carrier. This reaction serves as the major source of one-carbon groups required for the biosynthesis of purines, thymidylate, methionine, and other important biomolecules. Also exhibits THF-independent aldolase activity toward beta-hydroxyamino acids, producing glycine and aldehydes, via a retro-aldol mechanism. In Vibrio parahaemolyticus serotype O3:K6 (strain RIMD 2210633), this protein is Serine hydroxymethyltransferase 1.